Here is a 1007-residue protein sequence, read N- to C-terminus: Glutamate receptor ionotropic, delta-2 (1007 aa).

The N-terminal stretch at 1-23 (MEVFPLLLFLSFCWSRTWDLATA) is a signal peptide. Residues 24-345 (DSIIHIGAIF…NAFHKKLEDR (322 aa)) are interaction with CBLN1 homotrimer. Over 24 to 566 (DSIIHIGAIF…DMFACLAPFD (543 aa)) the chain is Extracellular. 3 disulfide bridges follow: Cys-83–Cys-355, Cys-99–Cys-131, and Cys-298–Cys-310. Asn-293 is a glycosylation site (N-linked (GlcNAc...) asparagine). An N-linked (GlcNAc...) asparagine glycan is attached at Asn-426. Ca(2+) contacts are provided by Glu-531, Val-534, and Asp-535. The chain crosses the membrane as a helical span at residues 567–587 (LSLWACIAGTVLLVGLLVYLL). The Cytoplasmic portion of the chain corresponds to 588–635 (NWLNPPRLQMGSMTSTTLYNSMWFVYGSFVQQGGEVPYTTLATRMMMG). A helical membrane pass occupies residues 636 to 656 (AWWLFALIVISSYTANLAAFL). Over 657 to 830 (TITRIESSIQ…QKGGALDIKS (174 aa)) the chain is Extracellular. Residues Asn-713 and Asn-716 are each glycosylated (N-linked (GlcNAc...) asparagine). Asp-753, Asp-755, and Ser-757 together coordinate Ca(2+). Residues 831–851 (LAGVFCILAAGIVLSCLIAVL) traverse the membrane as a helical segment. The Cytoplasmic portion of the chain corresponds to 852–1007 (ETWWSRRKGS…GNDPDRGTSI (156 aa)). Ser-883 carries the post-translational modification Phosphoserine. Residue Thr-886 is modified to Phosphothreonine. Position 890 is a phosphoserine (Ser-890). The interval 921 to 991 (DFRNTHITTT…MSSIPYQPTP (71 aa)) is interaction with AP4M1. Residues 1005–1007 (TSI) carry the PDZ-binding motif. Position 1006 is a phosphoserine (Ser-1006).

The protein belongs to the glutamate-gated ion channel (TC 1.A.10.1) family. GRID2 subfamily. Tetramer; dimer of dimers. Interacts with EML2, MAGI2 (via PDZ domains) and AP4M1. Interacts with BECN1, GOPC, GRID2IP, SHANK1 and SHANK2. Interacts with CBLN2, but not with CBLN4. Interacts with CBLN1 (via C1q domain); the interaction is CBLN1-NRX1 complex formation-dependent; CBLN1-binding is calcium-independent; CBLN1 hexamers anchor GRID2 N-terminal domain dimers to monomeric NRXN1 isoform beta; promotes synaptogenesis and mediates the D-Serine-dependent long term depression signals and AMPA receptor endocytosis. As to expression, expressed selectively in cerebellar Purkinje cells where it is localized in dendritic spines.

The protein resides in the postsynaptic cell membrane. It catalyses the reaction Ca(2+)(in) = Ca(2+)(out). It carries out the reaction Na(+)(in) = Na(+)(out). Member of the ionotropic glutamate receptor family, which plays a crucial role in synaptic organization and signal transduction in the central nervous system. Although it shares structural features with ionotropic glutamate receptors, does not bind glutamate as a primary ligand. Promotes synaptogenesis and mediates the D-Serine-dependent long term depression signals and AMPA receptor endocytosis of cerebellar parallel fiber-Purkinje cell (PF-PC) synapses through the NRX1B-CBLN1-GRID2 triad complex. In the presence of neurexins and cerebellins, forms cation-selective channels that are proposed to be gated by glycine and D-serine. However, recent research disputes this ligand-gated cation channel activity. Cation-selective ion channel activity can be triggered by GRM1 in Purkinje cells. The protein is Glutamate receptor ionotropic, delta-2 (Grid2) of Mus musculus (Mouse).